Consider the following 355-residue polypeptide: Small ribosomal subunit biogenesis GTPase RsgA 1 (355 aa).

The CP-type G domain maps to 103 to 262 (GRVADRQAIA…LIDTPGVREF (160 aa)). GTP-binding positions include 152–155 (NKAD) and 204–212 (GSSGVGKSS). Zn(2+) contacts are provided by Cys285, Cys290, His292, and Cys298.

This sequence belongs to the TRAFAC class YlqF/YawG GTPase family. RsgA subfamily. In terms of assembly, monomer. Associates with 30S ribosomal subunit, binds 16S rRNA. Requires Zn(2+) as cofactor.

The protein resides in the cytoplasm. Functionally, one of several proteins that assist in the late maturation steps of the functional core of the 30S ribosomal subunit. Helps release RbfA from mature subunits. May play a role in the assembly of ribosomal proteins into the subunit. Circularly permuted GTPase that catalyzes slow GTP hydrolysis, GTPase activity is stimulated by the 30S ribosomal subunit. This is Small ribosomal subunit biogenesis GTPase RsgA 1 from Bacteroides thetaiotaomicron (strain ATCC 29148 / DSM 2079 / JCM 5827 / CCUG 10774 / NCTC 10582 / VPI-5482 / E50).